Consider the following 545-residue polypeptide: MTKVPATKKLQKITSKKALWLFSSADQLTQQASDKTAKNSKYIDKEIANLKKDLMRSRFLIQCVKIGRGYFNILREENAMKKKQQLLQKLKEEELNKFQPAKKFSDIHCRDNLLATYDCEKLKKLEAGIIIRPFTPIHSCLMAPSLPESHVDPLFRQLCALHWLLEALTIDHTHHTMRPLIACWNPKDPGGSKSTIKKINKDKSMGQRWDHFVTAPKTKKYKAPAIRTAMASRKPSRRGSTLSLTRTSGGSSPQSSMMSVNPGSDEPMGSKDIEDNESSSTKPEEEILHLYLQKLLEMVREDARRTILVESEIQKKAPSILSLVKQIKSEYGWKEWQTTHKSSERSSTTSAESHIQVIQKKSKSRVNRDIIYCKTGVCSNMRAKFFSVAQEAGFCLQDKMEILRKRQEERGLQKFHSFIVTSNFQKDITKMRHQVSIVKGDAEEIADHWYFDLLSKLPEDLKSFRPAKKILMKLQKFGENLDLRIRPHVLLKVLQDLRIWELCSPDIAVAIEFVREHIIHMPQEDYINWLQSRVNIPFRQRTILT.

Positions 72-99 (NILREENAMKKKQQLLQKLKEEELNKFQ) form a coiled coil. Positions 224-284 (PAIRTAMASR…DNESSSTKPE (61 aa)) are disordered. The span at 238–259 (RGSTLSLTRTSGGSSPQSSMMS) shows a compositional bias: low complexity.

This Mus musculus (Mouse) protein is Coiled-coil domain-containing protein 60 (Ccdc60).